A 120-amino-acid chain; its full sequence is U3-hexatoxin-Hi1a (120 aa).

Residues 1 to 19 form the signal peptide; it reads MKLLYFFVVITVLVAVAAA. A propeptide spanning residues 20–51 is cleaved from the precursor; the sequence is LPAKTEEQIAAEENQLVEDLVQYAGTRLTRKR.

This sequence belongs to the neurotoxin 25 family. F7 subfamily. Contains 4 disulfide bonds. As to expression, expressed by the venom gland.

It is found in the secreted. Its function is as follows. Weak insecticidal toxin with probable ion channel impairing activity. In vivo, induces paralysis when injected into sheep blowflies (L.cuprina). Shows weak toxicity, since it is only toxic at high doses, and flies recover within 24 hours. The chain is U3-hexatoxin-Hi1a from Hadronyche infensa (Fraser island funnel-web spider).